The following is a 137-amino-acid chain: Regulator of cell cycle RGCC (137 aa).

2 disordered regions span residues 1-20 (MKPP…APAL) and 57-80 (LERM…SESA). Residues 65 to 80 (SASVSDSSGFSDSESA) are compositionally biased toward low complexity. 6 positions are modified to phosphoserine: Ser-67, Ser-69, Ser-71, Ser-75, Ser-91, and Ser-97. Residue Thr-111 is modified to Phosphothreonine; by CDK1.

Interacts with SMAD3. Interacts with CDK1 and PLK1. Detected in brain, heart and liver (at protein level). Highly expressed in liver, skeletal muscle, kidney and pancreas. Detected at lower levels in heart, brain and placenta. Detected in aorta endothelial cells. Overexpressed in colon, breast, prostate, bladder, lung, and ovarian cancer tissues.

The protein resides in the cytoplasm. It localises to the nucleus. The protein localises to the cytoskeleton. It is found in the microtubule organizing center. Its subcellular location is the centrosome. Functionally, modulates the activity of cell cycle-specific kinases. Enhances CDK1 activity. May contribute to the regulation of the cell cycle. May inhibit growth of glioma cells by promoting arrest of mitotic progression at the G2/M transition. Fibrogenic factor contributing to the pathogenesis of renal fibrosis through fibroblast activation. The protein is Regulator of cell cycle RGCC (RGCC) of Homo sapiens (Human).